The primary structure comprises 161 residues: Large ribosomal subunit protein uL15 (161 aa).

The segment covering 1 to 13 (MKLNELRDNEGAA) has biased composition (basic and acidic residues). Residues 1-51 (MKLNELRDNEGAARKKKRVARGPGSGKGKTAGRGIKGQKSRSGVALNGYEG) form a disordered region. Over residues 23–35 (PGSGKGKTAGRGI) the composition is skewed to gly residues.

Belongs to the universal ribosomal protein uL15 family. In terms of assembly, part of the 50S ribosomal subunit.

Binds to the 23S rRNA. The chain is Large ribosomal subunit protein uL15 from Cereibacter sphaeroides (strain ATCC 17023 / DSM 158 / JCM 6121 / CCUG 31486 / LMG 2827 / NBRC 12203 / NCIMB 8253 / ATH 2.4.1.) (Rhodobacter sphaeroides).